Here is a 31-residue protein sequence, read N- to C-terminus: Dermaseptin-DI3 (31 aa).

It belongs to the frog skin active peptide (FSAP) family. Dermaseptin subfamily. As to expression, expressed by the skin glands.

The protein resides in the secreted. In terms of biological role, antibacterial activity against Gram-positive bacteria S.aureus and E.faecalis, and Gram-negative bacteria P.aeruginosa and E.coli. The chain is Dermaseptin-DI3 from Phyllomedusa distincta (Monkey frog).